The sequence spans 417 residues: MDKLLIEGGKVLSGEVAMSGAKNAALPILCASLLTSDPVHFTNVPHLNDISTMLRLLGDMGVGVTMDGIDGIVLNGGGLNNPVASYEMVKTMRASILVLGPLVARCGEARVSLPGGCAIGARPVDQHIKGLQAMGAEVKVEQGYVHAKATRLKGARICTDMVTVTGTENLMMAACLAEGETVIENAAREPEVVDLANCLVSMGARISGAGTDVIRIQGVDKLHGATHAIMPDRIETGTYLCAAAATGGDIRLLKTSAAYLDTVVDKLMDAGCEITVERDAIRLVAPKRLKAVSLRTAPYPAFPTDMQAQFMAINCIADGVATIRETIFENRFMHVNELMRLGANIQIEGNNAIVRGVDRLEGATVMATDLRASASLVIAGLVAQGETVIDRIYHLDRGYERIEEKLAKLGAAVRRVH.

22 to 23 (KN) lines the phosphoenolpyruvate pocket. Arginine 93 contacts UDP-N-acetyl-alpha-D-glucosamine. The Proton donor role is filled by cysteine 117. Cysteine 117 carries the 2-(S-cysteinyl)pyruvic acid O-phosphothioketal modification. Residues 122–126 (RPVDQ), aspartate 305, and isoleucine 327 each bind UDP-N-acetyl-alpha-D-glucosamine.

It belongs to the EPSP synthase family. MurA subfamily.

The protein resides in the cytoplasm. The catalysed reaction is phosphoenolpyruvate + UDP-N-acetyl-alpha-D-glucosamine = UDP-N-acetyl-3-O-(1-carboxyvinyl)-alpha-D-glucosamine + phosphate. It participates in cell wall biogenesis; peptidoglycan biosynthesis. Its function is as follows. Cell wall formation. Adds enolpyruvyl to UDP-N-acetylglucosamine. The polypeptide is UDP-N-acetylglucosamine 1-carboxyvinyltransferase (Dechloromonas aromatica (strain RCB)).